The chain runs to 230 residues: Ribosomal RNA small subunit methyltransferase G (230 aa).

Residues glycine 91, leucine 96, 142-143 (VE), and arginine 161 each bind S-adenosyl-L-methionine.

This sequence belongs to the methyltransferase superfamily. RNA methyltransferase RsmG family.

The protein localises to the cytoplasm. It catalyses the reaction guanosine(527) in 16S rRNA + S-adenosyl-L-methionine = N(7)-methylguanosine(527) in 16S rRNA + S-adenosyl-L-homocysteine. Specifically methylates the N7 position of guanine in position 527 of 16S rRNA. The chain is Ribosomal RNA small subunit methyltransferase G from Burkholderia pseudomallei (strain K96243).